We begin with the raw amino-acid sequence, 568 residues long: 2-succinyl-5-enolpyruvyl-6-hydroxy-3-cyclohexene-1-carboxylate synthase (568 aa).

The protein belongs to the TPP enzyme family. MenD subfamily. Homodimer. Requires Mg(2+) as cofactor. Mn(2+) is required as a cofactor. It depends on thiamine diphosphate as a cofactor.

The enzyme catalyses isochorismate + 2-oxoglutarate + H(+) = 5-enolpyruvoyl-6-hydroxy-2-succinyl-cyclohex-3-ene-1-carboxylate + CO2. It functions in the pathway quinol/quinone metabolism; 1,4-dihydroxy-2-naphthoate biosynthesis; 1,4-dihydroxy-2-naphthoate from chorismate: step 2/7. The protein operates within quinol/quinone metabolism; menaquinone biosynthesis. Functionally, catalyzes the thiamine diphosphate-dependent decarboxylation of 2-oxoglutarate and the subsequent addition of the resulting succinic semialdehyde-thiamine pyrophosphate anion to isochorismate to yield 2-succinyl-5-enolpyruvyl-6-hydroxy-3-cyclohexene-1-carboxylate (SEPHCHC). The polypeptide is 2-succinyl-5-enolpyruvyl-6-hydroxy-3-cyclohexene-1-carboxylate synthase (Mannheimia succiniciproducens (strain KCTC 0769BP / MBEL55E)).